The chain runs to 55 residues: ATP synthase F(0) complex subunit 8 (55 aa).

The helical transmembrane segment at L4–I24 threads the bilayer. The segment at E36 to H55 is disordered.

It belongs to the ATPase protein 8 family. In terms of assembly, component of the ATP synthase complex composed at least of ATP5F1A/subunit alpha, ATP5F1B/subunit beta, ATP5MC1/subunit c (homooctomer), MT-ATP6/subunit a, MT-ATP8/subunit 8, ATP5ME/subunit e, ATP5MF/subunit f, ATP5MG/subunit g, ATP5MK/subunit k, ATP5MJ/subunit j, ATP5F1C/subunit gamma, ATP5F1D/subunit delta, ATP5F1E/subunit epsilon, ATP5PF/subunit F6, ATP5PB/subunit b, ATP5PD/subunit d, ATP5PO/subunit OSCP. ATP synthase complex consists of a soluble F(1) head domain (subunits alpha(3) and beta(3)) - the catalytic core - and a membrane F(0) domain - the membrane proton channel (subunits c, a, 8, e, f, g, k and j). These two domains are linked by a central stalk (subunits gamma, delta, and epsilon) rotating inside the F1 region and a stationary peripheral stalk (subunits F6, b, d, and OSCP).

The protein localises to the mitochondrion membrane. Its function is as follows. Subunit 8, of the mitochondrial membrane ATP synthase complex (F(1)F(0) ATP synthase or Complex V) that produces ATP from ADP in the presence of a proton gradient across the membrane which is generated by electron transport complexes of the respiratory chain. ATP synthase complex consist of a soluble F(1) head domain - the catalytic core - and a membrane F(1) domain - the membrane proton channel. These two domains are linked by a central stalk rotating inside the F(1) region and a stationary peripheral stalk. During catalysis, ATP synthesis in the catalytic domain of F(1) is coupled via a rotary mechanism of the central stalk subunits to proton translocation. In vivo, can only synthesize ATP although its ATP hydrolase activity can be activated artificially in vitro. Part of the complex F(0) domain. In Salvelinus alpinus (Arctic char), this protein is ATP synthase F(0) complex subunit 8.